The sequence spans 459 residues: Exodeoxyribonuclease 7 large subunit (459 aa).

Belongs to the XseA family. In terms of assembly, heterooligomer composed of large and small subunits.

It is found in the cytoplasm. It carries out the reaction Exonucleolytic cleavage in either 5'- to 3'- or 3'- to 5'-direction to yield nucleoside 5'-phosphates.. In terms of biological role, bidirectionally degrades single-stranded DNA into large acid-insoluble oligonucleotides, which are then degraded further into small acid-soluble oligonucleotides. The protein is Exodeoxyribonuclease 7 large subunit of Pseudomonas putida (strain ATCC 47054 / DSM 6125 / CFBP 8728 / NCIMB 11950 / KT2440).